Consider the following 127-residue polypeptide: Large-conductance mechanosensitive channel (127 aa).

3 helical membrane passes run 9-29, 32-52, and 75-95; these read EFAM…GVAF, IVTA…LGGV, and VIDF…INLL.

The protein belongs to the MscL family. As to quaternary structure, homopentamer.

It localises to the cell inner membrane. In terms of biological role, channel that opens in response to stretch forces in the membrane lipid bilayer. May participate in the regulation of osmotic pressure changes within the cell. In Legionella pneumophila (strain Lens), this protein is Large-conductance mechanosensitive channel.